A 4625-amino-acid chain; its full sequence is Dynein-1-alpha heavy chain, flagellar inner arm I1 complex (4625 aa).

Residues 1–1919 (MDRRLEWVKE…LIRQCTGLFK (1919 aa)) form a stem region. The segment covering 70-84 (EQAPEAEDGEGEEHD) has biased composition (acidic residues). Residues 70 to 163 (EQAPEAEDGE…DEPPAPPAPK (94 aa)) form a disordered region. Low complexity predominate over residues 111–140 (EDAPAAAAEANGANPEDEAAAPADGAADGA). Over residues 144 to 155 (GGEEGDGAEGDE) the composition is skewed to acidic residues. 960–967 (AGTNSGKS) is a binding site for ATP. 2 coiled-coil regions span residues 1227–1259 (EELK…RYRT) and 1339–1409 (TVEL…AVRQ). AAA regions lie at residues 1920–2141 (YGYE…VLVM), 2201–2437 (DVVE…RRPK), 2550–2800 (EPPA…IYEG), and 2906–3155 (NFYN…LRRY). ATP-binding positions include 1958 to 1965 (GPAGTGKT), 2242 to 2249 (GQTGGGKT), 2588 to 2595 (GESGTAKS), and 2945 to 2952 (GVGGSGKQ). 2 coiled-coil regions span residues 3192-3297 (LEKL…IRSY) and 3400-3494 (KRKK…LIGD). Positions 3192–3494 (LEKLIQAAVE…ESRRDRLIGD (303 aa)) are stalk. AAA regions lie at residues 3542 to 3773 (LTSD…EIAE) and 3998 to 4216 (ITRF…LIST). Residue 3680-3687 (GPEISGKT) coordinates ATP. Positions 3701-3788 (EQLLNVTLRH…KVTAAEIEET (88 aa)) form a coiled coil.

It belongs to the dynein heavy chain family. In terms of assembly, the I1 inner arm complex (also known as the f dynein complex) is a two-headed isoform composed of two heavy chains (1-alpha and 1-beta), three intermediate chains and three light chains. I1 occupies a specific position proximal to the first radial spoke and repeats every 96 nm along the length of the axoneme.

The protein resides in the cell projection. Its subcellular location is the cilium. It is found in the flagellum. The protein localises to the cytoplasm. It localises to the cytoskeleton. The protein resides in the flagellum axoneme. Force generating protein of eukaryotic cilia and flagella. Produces force towards the minus ends of microtubules. Dynein has ATPase activity; the force-producing power stroke is thought to occur on release of ADP. Required for assembly of the I1 inner arm complex and its targeting to the appropriate axoneme location. Also required for phototaxis. The chain is Dynein-1-alpha heavy chain, flagellar inner arm I1 complex (DHC1) from Chlamydomonas reinhardtii (Chlamydomonas smithii).